Here is a 588-residue protein sequence, read N- to C-terminus: 2-succinyl-5-enolpyruvyl-6-hydroxy-3-cyclohexene-1-carboxylate synthase (588 aa).

It belongs to the TPP enzyme family. MenD subfamily. In terms of assembly, homodimer. Requires Mg(2+) as cofactor. It depends on Mn(2+) as a cofactor. Thiamine diphosphate is required as a cofactor.

It catalyses the reaction isochorismate + 2-oxoglutarate + H(+) = 5-enolpyruvoyl-6-hydroxy-2-succinyl-cyclohex-3-ene-1-carboxylate + CO2. It participates in quinol/quinone metabolism; 1,4-dihydroxy-2-naphthoate biosynthesis; 1,4-dihydroxy-2-naphthoate from chorismate: step 2/7. Its pathway is cofactor biosynthesis; phylloquinone biosynthesis. Catalyzes the thiamine diphosphate-dependent decarboxylation of 2-oxoglutarate and the subsequent addition of the resulting succinic semialdehyde-thiamine pyrophosphate anion to isochorismate to yield 2-succinyl-5-enolpyruvyl-6-hydroxy-3-cyclohexene-1-carboxylate (SEPHCHC). The protein is 2-succinyl-5-enolpyruvyl-6-hydroxy-3-cyclohexene-1-carboxylate synthase of Prochlorococcus marinus (strain MIT 9515).